The sequence spans 40 residues: Photosystem II reaction center protein J (40 aa).

Residues 8–28 traverse the membrane as a helical segment; the sequence is IPLWLIGTVVGTPVISLVGIF.

The protein belongs to the PsbJ family. As to quaternary structure, PSII is composed of 1 copy each of membrane proteins PsbA, PsbB, PsbC, PsbD, PsbE, PsbF, PsbH, PsbI, PsbJ, PsbK, PsbL, PsbM, PsbT, PsbX, PsbY, PsbZ, Psb30/Ycf12, at least 3 peripheral proteins of the oxygen-evolving complex and a large number of cofactors. It forms dimeric complexes.

It localises to the plastid. The protein localises to the chloroplast thylakoid membrane. One of the components of the core complex of photosystem II (PSII). PSII is a light-driven water:plastoquinone oxidoreductase that uses light energy to abstract electrons from H(2)O, generating O(2) and a proton gradient subsequently used for ATP formation. It consists of a core antenna complex that captures photons, and an electron transfer chain that converts photonic excitation into a charge separation. The polypeptide is Photosystem II reaction center protein J (Huperzia lucidula (Shining clubmoss)).